A 275-amino-acid polypeptide reads, in one-letter code: NH(3)-dependent NAD(+) synthetase (275 aa).

ATP is bound at residue Gly-46–Ser-53. Asp-52 contributes to the Mg(2+) binding site. Arg-140 contributes to the deamido-NAD(+) binding site. An ATP-binding site is contributed by Thr-160. Residue Glu-165 coordinates Mg(2+). Positions 173 and 180 each coordinate deamido-NAD(+). Positions 189 and 211 each coordinate ATP. His-260 to Lys-261 is a deamido-NAD(+) binding site.

It belongs to the NAD synthetase family. Homodimer.

The catalysed reaction is deamido-NAD(+) + NH4(+) + ATP = AMP + diphosphate + NAD(+) + H(+). The protein operates within cofactor biosynthesis; NAD(+) biosynthesis; NAD(+) from deamido-NAD(+) (ammonia route): step 1/1. In terms of biological role, catalyzes the ATP-dependent amidation of deamido-NAD to form NAD. Uses ammonia as a nitrogen source. In Escherichia coli O6:K15:H31 (strain 536 / UPEC), this protein is NH(3)-dependent NAD(+) synthetase.